The primary structure comprises 422 residues: Adenylosuccinate synthetase (422 aa).

GTP is bound by residues 11–17 and 39–41; these read GDEGKGK and GHT. Asp12 serves as the catalytic Proton acceptor. Residues Asp12 and Gly39 each contribute to the Mg(2+) site. Residues 12-15, 37-40, Thr129, Arg143, Asn219, Thr234, and Arg298 contribute to the IMP site; these read DEGK and NAGH. His40 functions as the Proton donor in the catalytic mechanism. 294–300 serves as a coordination point for substrate; that stretch reads VTTGRRR. GTP is bound by residues Arg300, 326-328, and 409-411; these read KLD and GTG.

The protein belongs to the adenylosuccinate synthetase family. As to quaternary structure, homodimer. Requires Mg(2+) as cofactor.

It localises to the cytoplasm. It carries out the reaction IMP + L-aspartate + GTP = N(6)-(1,2-dicarboxyethyl)-AMP + GDP + phosphate + 2 H(+). It participates in purine metabolism; AMP biosynthesis via de novo pathway; AMP from IMP: step 1/2. In terms of biological role, plays an important role in the de novo pathway and in the salvage pathway of purine nucleotide biosynthesis. Catalyzes the first committed step in the biosynthesis of AMP from IMP. This is Adenylosuccinate synthetase from Blastomyces gilchristii (strain SLH14081) (Blastomyces dermatitidis).